We begin with the raw amino-acid sequence, 141 residues long: Hemoglobin subunit alpha-A (141 aa).

The region spanning 1–141 (VLSSHDKSNV…VGTVLTAKYR (141 aa)) is the Globin domain. His-58 is a binding site for O2. His-87 is a heme b binding site.

It belongs to the globin family. In terms of assembly, heterotetramer of two alpha chains and two beta chains. As to expression, red blood cells.

Its function is as follows. Involved in oxygen transport from the lung to the various peripheral tissues. The polypeptide is Hemoglobin subunit alpha-A (HBAA) (Phoenicopterus ruber (American flamingo)).